A 508-amino-acid polypeptide reads, in one-letter code: Steroid 17-alpha-hydroxylase/17,20 lyase (508 aa).

Residue cysteine 442 coordinates heme.

This sequence belongs to the cytochrome P450 family. Heme is required as a cofactor.

It is found in the endoplasmic reticulum membrane. Its subcellular location is the microsome membrane. The catalysed reaction is a C21-steroid + reduced [NADPH--hemoprotein reductase] + O2 = a 17alpha-hydroxy-C21-steroid + oxidized [NADPH--hemoprotein reductase] + H2O + H(+). The enzyme catalyses progesterone + reduced [NADPH--hemoprotein reductase] + O2 = 17alpha-hydroxyprogesterone + oxidized [NADPH--hemoprotein reductase] + H2O + H(+). It carries out the reaction pregnenolone + reduced [NADPH--hemoprotein reductase] + O2 = 17alpha-hydroxypregnenolone + oxidized [NADPH--hemoprotein reductase] + H2O + H(+). It catalyses the reaction 17alpha-hydroxyprogesterone + reduced [NADPH--hemoprotein reductase] + O2 = androst-4-ene-3,17-dione + acetate + oxidized [NADPH--hemoprotein reductase] + H2O + 2 H(+). The catalysed reaction is 17alpha-hydroxyprogesterone + reduced [NADPH--hemoprotein reductase] + O2 = 16alpha,17alpha-dihydroxyprogesterone + oxidized [NADPH--hemoprotein reductase] + H2O + H(+). The enzyme catalyses 16alpha,17alpha-dihydroxyprogesterone + reduced [NADPH--hemoprotein reductase] + O2 = 6beta,16alpha,17alpha-trihydroxyprogesterone + oxidized [NADPH--hemoprotein reductase] + H2O + H(+). It carries out the reaction 17alpha-hydroxypregnenolone + reduced [NADPH--hemoprotein reductase] + O2 = 3beta-hydroxyandrost-5-en-17-one + acetate + oxidized [NADPH--hemoprotein reductase] + H2O + 2 H(+). It catalyses the reaction 16alpha,17alpha-dihydroxypregnenolone + reduced [NADPH--hemoprotein reductase] + O2 = 3beta,16alpha-dihydroxy-androst-5-en-17-one + acetate + oxidized [NADPH--hemoprotein reductase] + H2O + 2 H(+). The catalysed reaction is 3beta-hydroxyandrost-5-en-17-one + reduced [NADPH--hemoprotein reductase] + O2 = 3beta,16alpha-dihydroxy-androst-5-en-17-one + oxidized [NADPH--hemoprotein reductase] + H2O + H(+). The enzyme catalyses androst-4-ene-3,17-dione + reduced [NADPH--hemoprotein reductase] + O2 = 16alpha-hydroxyandrost-4-ene-3,17-dione + oxidized [NADPH--hemoprotein reductase] + H2O + H(+). The protein operates within steroid hormone biosynthesis. Its pathway is steroid biosynthesis; glucocorticoid biosynthesis. Its activity is regulated as follows. Regulated predominantly by intracellular cAMP levels. The 17,20-lyase activity is stimulated by cytochrome b5, which acts as an allosteric effector increasing the Vmax of the lyase activity. In terms of biological role, a cytochrome P450 monooxygenase involved in corticoid and androgen biosynthesis. Catalyzes 17-alpha hydroxylation of C21 steroids, which is common for both pathways. A second oxidative step, required only for androgen synthesis, involves an acyl-carbon cleavage. The 17-alpha hydroxy intermediates, as part of adrenal glucocorticoids biosynthesis pathway, are precursors of cortisol. Hydroxylates steroid hormones, pregnenolone and progesterone to form 17-alpha hydroxy metabolites, followed by the cleavage of the C17-C20 bond to form C19 steroids, dehydroepiandrosterone (DHEA) and androstenedione. Has 16-alpha hydroxylase activity. Catalyzes 16-alpha hydroxylation of 17-alpha hydroxy pregnenolone, followed by the cleavage of the C17-C20 bond to form 16-alpha-hydroxy DHEA. Also 16-alpha hydroxylates androgens, relevant for estriol synthesis. Mechanistically, uses molecular oxygen inserting one oxygen atom into a substrate, and reducing the second into a water molecule, with two electrons provided by NADPH via cytochrome P450 reductase (CPR; NADPH-ferrihemoprotein reductase). The sequence is that of Steroid 17-alpha-hydroxylase/17,20 lyase (CYP17A1) from Cavia porcellus (Guinea pig).